The chain runs to 351 residues: tRNA pseudouridine synthase D (351 aa).

The active-site Nucleophile is the Asp-96. Residues Gly-174–Ala-304 enclose the TRUD domain. Residues Val-244–Ala-268 form a disordered region.

This sequence belongs to the pseudouridine synthase TruD family.

It carries out the reaction uridine(13) in tRNA = pseudouridine(13) in tRNA. Functionally, responsible for synthesis of pseudouridine from uracil-13 in transfer RNAs. In Marinobacter nauticus (strain ATCC 700491 / DSM 11845 / VT8) (Marinobacter aquaeolei), this protein is tRNA pseudouridine synthase D.